Consider the following 494-residue polypeptide: Acetylcholine receptor subunit epsilon (494 aa).

The first 20 residues, 1-20 (MTMALLGTLLLLALFGRSQG), serve as a signal peptide directing secretion. The Extracellular segment spans residues 21-239 (KNEELSLYHH…VIYTLIIRRK (219 aa)). N-linked (GlcNAc...) asparagine glycans are attached at residues asparagine 86 and asparagine 161. Cysteine 148 and cysteine 162 form a disulfide bridge. The chain crosses the membrane as a helical span at residues 240 to 264 (PLFYVINIIVPCVLISGLVLLAYFL). The Cytoplasmic portion of the chain corresponds to 265–272 (PAQAGGQK). A helical transmembrane segment spans residues 273-291 (CTVSINVLLAQTVFLFLIA). Residues 292–306 (QKIPETSLSVPLLGR) lie on the Extracellular side of the membrane. The chain crosses the membrane as a helical span at residues 307-328 (YLIFVMVVATLIVMNCVIVLNV). The Cytoplasmic segment spans residues 329–457 (SLRTPTTHAT…WVRMGKALDN (129 aa)). Residues 458–481 (VCFWAALVLFSVGSTLIFLGGYFN) traverse the membrane as a helical segment. Over 482-494 (QVPDLPYPPCIQP) the chain is Extracellular.

It belongs to the ligand-gated ion channel (TC 1.A.9) family. Acetylcholine receptor (TC 1.A.9.1) subfamily. Epsilon/CHRNE sub-subfamily. In terms of assembly, pentamer of two alpha chains, and one each of the beta, delta, and gamma (in immature muscle) or epsilon (in mature muscle) chains. The muscle heteropentamer composed of alpha-1, beta-1, delta, epsilon subunits interacts with the alpha-conotoxin ImII.

It is found in the postsynaptic cell membrane. The protein localises to the cell membrane. The catalysed reaction is K(+)(in) = K(+)(out). The enzyme catalyses Na(+)(in) = Na(+)(out). Its function is as follows. After binding acetylcholine, the AChR responds by an extensive change in conformation that affects all subunits and leads to opening of an ion-conducting channel across the plasma membrane. This chain is Acetylcholine receptor subunit epsilon (Chrne), found in Rattus norvegicus (Rat).